The chain runs to 483 residues: Probable gamma-aminobutyrate transaminase 4 (483 aa).

138-139 (GS) lines the pyridoxal 5'-phosphate pocket. Tyr171 contributes to the substrate binding site. A pyridoxal 5'-phosphate-binding site is contributed by Asp278. Lys307 is a substrate binding site. At Lys307 the chain carries N6-(pyridoxal phosphate)lysine.

Belongs to the class-III pyridoxal-phosphate-dependent aminotransferase family. In terms of tissue distribution, not detected in roots, stems, flowers or leaves of healthy plants.

It localises to the cytoplasm. It catalyses the reaction 4-aminobutanoate + pyruvate = succinate semialdehyde + L-alanine. The enzyme catalyses 4-aminobutanoate + glyoxylate = succinate semialdehyde + glycine. In terms of biological role, transaminase that degrades gamma-amino butyric acid (GABA). The sequence is that of Probable gamma-aminobutyrate transaminase 4 (GABA-T) from Oryza sativa subsp. japonica (Rice).